Reading from the N-terminus, the 557-residue chain is 2-succinyl-5-enolpyruvyl-6-hydroxy-3-cyclohexene-1-carboxylate synthase (557 aa).

It belongs to the TPP enzyme family. MenD subfamily. In terms of assembly, homodimer. Mg(2+) is required as a cofactor. Mn(2+) serves as cofactor. It depends on thiamine diphosphate as a cofactor.

The enzyme catalyses isochorismate + 2-oxoglutarate + H(+) = 5-enolpyruvoyl-6-hydroxy-2-succinyl-cyclohex-3-ene-1-carboxylate + CO2. The protein operates within quinol/quinone metabolism; 1,4-dihydroxy-2-naphthoate biosynthesis; 1,4-dihydroxy-2-naphthoate from chorismate: step 2/7. Its pathway is quinol/quinone metabolism; menaquinone biosynthesis. Its function is as follows. Catalyzes the thiamine diphosphate-dependent decarboxylation of 2-oxoglutarate and the subsequent addition of the resulting succinic semialdehyde-thiamine pyrophosphate anion to isochorismate to yield 2-succinyl-5-enolpyruvyl-6-hydroxy-3-cyclohexene-1-carboxylate (SEPHCHC). This Serratia proteamaculans (strain 568) protein is 2-succinyl-5-enolpyruvyl-6-hydroxy-3-cyclohexene-1-carboxylate synthase.